The chain runs to 156 residues: Ribosomal RNA large subunit methyltransferase H (156 aa).

Residues Leu-73, Gly-104, and 123–128 each bind S-adenosyl-L-methionine; that span reads LSSLTL.

It belongs to the RNA methyltransferase RlmH family. In terms of assembly, homodimer.

Its subcellular location is the cytoplasm. It catalyses the reaction pseudouridine(1915) in 23S rRNA + S-adenosyl-L-methionine = N(3)-methylpseudouridine(1915) in 23S rRNA + S-adenosyl-L-homocysteine + H(+). Functionally, specifically methylates the pseudouridine at position 1915 (m3Psi1915) in 23S rRNA. This Bordetella avium (strain 197N) protein is Ribosomal RNA large subunit methyltransferase H.